Here is a 131-residue protein sequence, read N- to C-terminus: Hypocretin neuropeptide precursor (131 aa).

Positions 1–33 (MNPPFAKVSWATVTLLLLLLLLPPAVLSPGAAA) are cleaved as a signal peptide. Pyrrolidone carboxylic acid is present on Gln34. 2 disulfide bridges follow: Cys39–Cys45 and Cys40–Cys47. Residue Leu66 is modified to Leucine amide. The residue at position 97 (Met97) is a Methionine amide. Residues 98–131 (GRRAGAEPAPRLCPGRRCLAAAASSVAPGGRSGI) constitute a propeptide, removed in mature form.

It belongs to the orexin family. Post-translationally, specific enzymatic cleavages at paired basic residues yield the different active peptides.

The protein resides in the rough endoplasmic reticulum. The protein localises to the cytoplasmic vesicle. It localises to the synapse. Its function is as follows. Neuropeptides that play a significant role in the regulation of food intake and sleep-wakefulness, possibly by coordinating the complex behavioral and physiologic responses of these complementary homeostatic functions. A broader role in the homeostatic regulation of energy metabolism, autonomic function, hormonal balance and the regulation of body fluids, is also suggested. In terms of biological role, binds to orexin receptors HCRTR1/OX1R and HCRTR2/OX2R with a high affinity. Stimulates food intake. Modulates pituitary luteinizing hormone secretion in an ovarian steroid-dependent manner. Functionally, binds to orexin receptor HCRTR2/OX2R only. Stimulates food intake. Modulates pituitary luteinizing hormone secretion in an ovarian steroid-dependent manner. This is Hypocretin neuropeptide precursor (HCRT) from Sus scrofa (Pig).